Here is a 160-residue protein sequence, read N- to C-terminus: Crossover junction endodeoxyribonuclease RuvC (160 aa).

Active-site residues include D7, E73, and D145. Residues D7, E73, and D145 each contribute to the Mg(2+) site.

This sequence belongs to the RuvC family. In terms of assembly, homodimer which binds Holliday junction (HJ) DNA. The HJ becomes 2-fold symmetrical on binding to RuvC with unstacked arms; it has a different conformation from HJ DNA in complex with RuvA. In the full resolvosome a probable DNA-RuvA(4)-RuvB(12)-RuvC(2) complex forms which resolves the HJ. Requires Mg(2+) as cofactor.

It is found in the cytoplasm. It catalyses the reaction Endonucleolytic cleavage at a junction such as a reciprocal single-stranded crossover between two homologous DNA duplexes (Holliday junction).. Its function is as follows. The RuvA-RuvB-RuvC complex processes Holliday junction (HJ) DNA during genetic recombination and DNA repair. Endonuclease that resolves HJ intermediates. Cleaves cruciform DNA by making single-stranded nicks across the HJ at symmetrical positions within the homologous arms, yielding a 5'-phosphate and a 3'-hydroxyl group; requires a central core of homology in the junction. The consensus cleavage sequence is 5'-(A/T)TT(C/G)-3'. Cleavage occurs on the 3'-side of the TT dinucleotide at the point of strand exchange. HJ branch migration catalyzed by RuvA-RuvB allows RuvC to scan DNA until it finds its consensus sequence, where it cleaves and resolves the cruciform DNA. In Synechococcus sp. (strain CC9311), this protein is Crossover junction endodeoxyribonuclease RuvC.